A 338-amino-acid polypeptide reads, in one-letter code: Tagatose 1,6-diphosphate aldolase (338 aa).

The protein belongs to the aldolase LacD family.

It catalyses the reaction D-tagatofuranose 1,6-bisphosphate = D-glyceraldehyde 3-phosphate + dihydroxyacetone phosphate. It participates in carbohydrate metabolism; D-tagatose 6-phosphate degradation; D-glyceraldehyde 3-phosphate and glycerone phosphate from D-tagatose 6-phosphate: step 2/2. This is Tagatose 1,6-diphosphate aldolase from Listeria monocytogenes serotype 4b (strain CLIP80459).